The chain runs to 548 residues: T-complex protein 1 subunit alpha (548 aa).

This sequence belongs to the TCP-1 chaperonin family. Heterooligomeric complex of about 850 to 900 kDa that forms two stacked rings, 12 to 16 nm in diameter.

The protein resides in the cytoplasm. In terms of biological role, molecular chaperone; assists the folding of proteins upon ATP hydrolysis. Known to play a role, in vitro, in the folding of actin and tubulin. The sequence is that of T-complex protein 1 subunit alpha (tcp1) from Dictyostelium discoideum (Social amoeba).